Consider the following 247-residue polypeptide: Putative trypsin-6 (247 aa).

An N-terminal signal peptide occupies residues 1–15 (MNPLLILAFVGAAVA). In terms of domain architecture, Peptidase S1 spans 24-244 (IVGGYTCEEN…YVDWIKDTIA (221 aa)). Cys48 and Cys64 form a disulfide bridge. The active-site Charge relay system is the His63. Ca(2+) is bound by residues Glu75, Asn77, Val80, and Glu85. Asp107 functions as the Charge relay system in the catalytic mechanism. 3 disulfide bridges follow: Cys139–Cys206, Cys171–Cys185, and Cys196–Cys220. Residue Ser200 is the Charge relay system of the active site.

The protein belongs to the peptidase S1 family. Tryptase subfamily. Overexpressed in metastasing in non small cell lung tumors, leading to an enhanced cell migration.

The protein localises to the secreted. It catalyses the reaction Preferential cleavage: Arg-|-Xaa, Lys-|-Xaa.. Functionally, may regulate cell migration. This chain is Putative trypsin-6 (PRSS3P2), found in Homo sapiens (Human).